The chain runs to 98 residues: MTPTHFSLNAAFMLGLAGLTFHRVHLLSALLCLEGMMLSLFISMALWTLKTESMSLSTAPMLLLAFSACEASAGLALLVATARTHGSDHMKNLNLLQC.

3 helical membrane-spanning segments follow: residues 1–21 (MTPT…GLTF), 26–46 (LLSA…SMAL), and 59–79 (APML…ALLV).

It belongs to the complex I subunit 4L family. Core subunit of respiratory chain NADH dehydrogenase (Complex I) which is composed of 45 different subunits.

It is found in the mitochondrion inner membrane. It catalyses the reaction a ubiquinone + NADH + 5 H(+)(in) = a ubiquinol + NAD(+) + 4 H(+)(out). In terms of biological role, core subunit of the mitochondrial membrane respiratory chain NADH dehydrogenase (Complex I) which catalyzes electron transfer from NADH through the respiratory chain, using ubiquinone as an electron acceptor. Part of the enzyme membrane arm which is embedded in the lipid bilayer and involved in proton translocation. The sequence is that of NADH-ubiquinone oxidoreductase chain 4L (mt-nd4l) from Danio rerio (Zebrafish).